Reading from the N-terminus, the 326-residue chain is L-carnitine dehydrogenase (326 aa).

Residue 19-24 (GTGVIG) coordinates NAD(+).

The protein belongs to the 3-hydroxyacyl-CoA dehydrogenase family. L-carnitine dehydrogenase subfamily. In terms of assembly, homodimer.

The protein resides in the cytoplasm. It carries out the reaction carnitine + NAD(+) = 3-dehydrocarnitine + NADH + H(+). Its pathway is amine and polyamine metabolism; carnitine metabolism. Functionally, catalyzes the NAD(+)-dependent oxidation of L-carnitine to 3-dehydrocarnitine. This chain is L-carnitine dehydrogenase, found in Bacillus cereus (strain ZK / E33L).